A 380-amino-acid chain; its full sequence is Alkanesulfonate monooxygenase (380 aa).

The protein belongs to the SsuD family. In terms of assembly, homotetramer.

The catalysed reaction is an alkanesulfonate + FMNH2 + O2 = an aldehyde + FMN + sulfite + H2O + 2 H(+). Catalyzes the desulfonation of aliphatic sulfonates. This Pectobacterium atrosepticum (strain SCRI 1043 / ATCC BAA-672) (Erwinia carotovora subsp. atroseptica) protein is Alkanesulfonate monooxygenase.